The following is a 210-amino-acid chain: Large ribosomal subunit protein uL5 (210 aa).

The interval 188–210 (AKDDPKKAKTKRGPAYYAKKKKK) is disordered. Positions 195–210 (AKTKRGPAYYAKKKKK) are enriched in basic residues.

Belongs to the universal ribosomal protein uL5 family. In terms of assembly, part of the 50S ribosomal subunit; part of the 5S rRNA/L5/L18/L25 subcomplex. Contacts the 5S rRNA and the P site tRNA. Forms a bridge to the 30S subunit in the 70S ribosome.

This is one of the proteins that bind and probably mediate the attachment of the 5S RNA into the large ribosomal subunit, where it forms part of the central protuberance. In the 70S ribosome it contacts protein S13 of the 30S subunit (bridge B1b), connecting the 2 subunits; this bridge is implicated in subunit movement. Contacts the P site tRNA; the 5S rRNA and some of its associated proteins might help stabilize positioning of ribosome-bound tRNAs. In Cutibacterium acnes (strain DSM 16379 / KPA171202) (Propionibacterium acnes), this protein is Large ribosomal subunit protein uL5.